The sequence spans 651 residues: Endoplasmic reticulum chaperone BiP (651 aa).

The N-terminal stretch at 1 to 20 (MGLSTYVGIFLLCILTLSRC) is a signal peptide. Residues 36-39 (GTTY), Lys96, 226-228 (GGT), 292-299 (EKAKRTLS), and 363-366 (GSTR) each bind ATP. The nucleotide-binding (NBD) stretch occupies residues 125-279 (KPYMKVQVGS…KKKEGKDITK (155 aa)). Positions 399–499 (VQAGVISGVE…PRGLPQIEVT (101 aa)) are substrate-binding (SBD). A Prevents secretion from ER motif is present at residues 648 to 651 (KEEL).

Belongs to the heat shock protein 70 family.

Its subcellular location is the endoplasmic reticulum lumen. The enzyme catalyses ATP + H2O = ADP + phosphate + H(+). Its activity is regulated as follows. The chaperone activity is regulated by ATP-induced allosteric coupling of the nucleotide-binding (NBD) and substrate-binding (SBD) domains. In the ADP-bound and nucleotide-free (apo) states, the two domains have little interaction. In contrast, in the ATP-bound state the two domains are tightly coupled, which results in drastically accelerated kinetics in both binding and release of polypeptide substrates. J domain-containing co-chaperones stimulate the ATPase activity and are required for efficient substrate recognition. Functionally, endoplasmic reticulum chaperone that plays a key role in protein folding and quality control in the endoplasmic reticulum lumen. Involved in the correct folding of proteins and degradation of misfolded proteins. Acts as a key repressor of the unfolded protein response (UPR). In Echinococcus granulosus (Hydatid tapeworm), this protein is Endoplasmic reticulum chaperone BiP.